The primary structure comprises 488 residues: Glutamyl-tRNA(Gln) amidotransferase subunit A (488 aa).

Residues K77 and S152 each act as charge relay system in the active site. The Acyl-ester intermediate role is filled by S176.

This sequence belongs to the amidase family. GatA subfamily. As to quaternary structure, heterotrimer of A, B and C subunits.

It carries out the reaction L-glutamyl-tRNA(Gln) + L-glutamine + ATP + H2O = L-glutaminyl-tRNA(Gln) + L-glutamate + ADP + phosphate + H(+). In terms of biological role, allows the formation of correctly charged Gln-tRNA(Gln) through the transamidation of misacylated Glu-tRNA(Gln) in organisms which lack glutaminyl-tRNA synthetase. The reaction takes place in the presence of glutamine and ATP through an activated gamma-phospho-Glu-tRNA(Gln). This is Glutamyl-tRNA(Gln) amidotransferase subunit A from Streptococcus pyogenes serotype M6 (strain ATCC BAA-946 / MGAS10394).